A 91-amino-acid chain; its full sequence is Bombyxin B-1 homolog (91 aa).

The signal sequence occupies residues 1-19 (MKVSMFVVIVLCMVAASSA). 3 disulfides stabilise this stretch: Cys27–Cys78, Cys39–Cys91, and Cys77–Cys82. Residues 49–69 (SGAQYARYGWQSPESREGARG) constitute a propeptide, c peptide like.

This sequence belongs to the insulin family. In terms of assembly, heterodimer of a B chain and an A chain linked by two disulfide bonds.

It is found in the secreted. Its function is as follows. Brain peptide responsible for activation of prothoracic glands to produce ecdysone in insects. The chain is Bombyxin B-1 homolog (SBXB1) from Samia cynthia (Ailanthus silkmoth).